The sequence spans 221 residues: Phosphate-specific transport system accessory protein PhoU homolog 1 (221 aa).

It belongs to the PhoU family. Homodimer.

Its subcellular location is the cytoplasm. Its function is as follows. Plays a role in the regulation of phosphate uptake. In this role, it may bind, possibly as a chaperone, to PhoR, PhoP or a PhoR-PhoP complex to promote dephosphorylation of phospho-PhoP, or inhibit formation of the PhoR-PhoP transitory complex. This Mycobacterium bovis (strain ATCC BAA-935 / AF2122/97) protein is Phosphate-specific transport system accessory protein PhoU homolog 1 (phoU1).